An 89-amino-acid polypeptide reads, in one-letter code: Small ribosomal subunit protein uS15 (89 aa).

It belongs to the universal ribosomal protein uS15 family. In terms of assembly, part of the 30S ribosomal subunit. Forms a bridge to the 50S subunit in the 70S ribosome, contacting the 23S rRNA.

In terms of biological role, one of the primary rRNA binding proteins, it binds directly to 16S rRNA where it helps nucleate assembly of the platform of the 30S subunit by binding and bridging several RNA helices of the 16S rRNA. Forms an intersubunit bridge (bridge B4) with the 23S rRNA of the 50S subunit in the ribosome. This Rhodococcus erythropolis (strain PR4 / NBRC 100887) protein is Small ribosomal subunit protein uS15.